Consider the following 295-residue polypeptide: NAD kinase (295 aa).

The Proton acceptor role is filled by Asp-74. NAD(+) is bound by residues 74–75, 148–149, His-159, Arg-176, Asp-178, and 189–194; these read DG, ND, and TAYALS.

The protein belongs to the NAD kinase family. A divalent metal cation serves as cofactor.

The protein resides in the cytoplasm. The catalysed reaction is NAD(+) + ATP = ADP + NADP(+) + H(+). In terms of biological role, involved in the regulation of the intracellular balance of NAD and NADP, and is a key enzyme in the biosynthesis of NADP. Catalyzes specifically the phosphorylation on 2'-hydroxyl of the adenosine moiety of NAD to yield NADP. This is NAD kinase from Legionella pneumophila (strain Corby).